Consider the following 481-residue polypeptide: G-protein coupled receptor 37-like 1 (481 aa).

Positions 1-25 (MRWLWPLAVSLAVILAVGLSRVSGG) are cleaved as a signal peptide. Disordered stretches follow at residues 26 to 58 (APLHLGRHRAETQEQQSRSKRGTEDEEAKGVQQ) and 70 to 108 (PIHPAGLQPTKPLVATSPNPGKDGGTPDSGQELRGNLTG). Over 26-134 (APLHLGRHRA…ESSYSAYAIM (109 aa)) the chain is Extracellular. O-linked (GalNAc...) threonine glycans are attached at residues threonine 79 and threonine 85. The O-linked (GalNAc...) serine glycan is linked to serine 86. The O-linked (GalNAc...) threonine glycan is linked to threonine 95. Asparagine 105 is a glycosylation site (N-linked (GlcNAc...) asparagine). Threonine 107 carries an O-linked (GalNAc...) threonine glycan. A helical transmembrane segment spans residues 135–155 (LLALVVFAVGIVGNLSVMCIV). The Cytoplasmic portion of the chain corresponds to 156–167 (WHSYYLKSAWNS). A helical membrane pass occupies residues 168 to 188 (ILASLALWDFLVLFFCLPIVI). The Extracellular portion of the chain corresponds to 189–205 (FNEITKQRLLGDVSCRA). Cysteine 203 and cysteine 286 form a disulfide bridge. A helical membrane pass occupies residues 206–226 (VPFMEVSSLGVTTFSLCALGI). The Cytoplasmic segment spans residues 227 to 251 (DRFHVATSTLPKVRPIERCQSILAK). The helical transmembrane segment at 252 to 272 (LAVIWVGSMTLAVPELLLWQL) threads the bilayer. Residues 273-310 (AQEPAPTMGTLDSCIMKPSASLPESLYSLVMTYQNARM) are Extracellular-facing. Residues 311-331 (WWYFGCYFCLPILFTVTCQLV) form a helical membrane-spanning segment. Residues 332 to 361 (TWRVRGPPGRKSECRASKHEQCESQLNSTV) lie on the Cytoplasmic side of the membrane. The helical transmembrane segment at 362 to 382 (VGLTVVYAFCTLPENVCNIVV) threads the bilayer. At 383 to 398 (AYLSTELTRQTLDLLG) the chain is on the extracellular side. Residues 399–419 (LINQFSTFFKGAITPVLLLCI) traverse the membrane as a helical segment. At 420–481 (CRPLGQAFLD…PPLLPLGTPC (62 aa)) the chain is on the cytoplasmic side. Phosphoserine is present on serine 471. Threonine 479 is subject to Phosphothreonine.

Belongs to the G-protein coupled receptor 1 family. Interacts with the PTCH1 receptor. Post-translationally, O-glycosylated. In terms of processing, undergoes metalloprotease-mediated cleavage which reduces its constitutive activity. Ubiquitinated. In terms of tissue distribution, expressed in primary cortical astrocytes (at protein level). Expressed in the central nervous system.

Its subcellular location is the cell membrane. It localises to the cell projection. The protein localises to the cilium membrane. Functionally, G-protein coupled receptor. Has been shown to bind the neuroprotective and glioprotective factor prosaposin (PSAP), leading to endocytosis followed by an ERK phosphorylation cascade. However, other studies have shown that prosaposin does not increase activity. It has been suggested that GPR37L1 is a constitutively active receptor which signals through the guanine nucleotide-binding protein G(s) subunit alpha. Participates in the regulation of postnatal cerebellar development by modulating the Shh pathway. Regulates baseline blood pressure in females and protects against cardiovascular stress in males. Mediates inhibition of astrocyte glutamate transporters and reduction in neuronal N-methyl-D-aspartate receptor activity. The chain is G-protein coupled receptor 37-like 1 (GPR37L1) from Homo sapiens (Human).